Consider the following 1308-residue polypeptide: Spermatogenesis-associated protein 31F1B (1308 aa).

Residues F7–I27 traverse the membrane as a helical segment. Disordered regions lie at residues S464–P488, S627–G648, H844–L863, P902–G927, F1005–K1026, G1084–K1190, and M1204–Q1254. Residues P465–S478 show a composition bias toward pro residues. A compositionally biased stretch (acidic residues) spans M1107–D1117.

This sequence belongs to the SPATA31 family.

It localises to the membrane. The protein is Spermatogenesis-associated protein 31F1B of Mus musculus (Mouse).